We begin with the raw amino-acid sequence, 1093 residues long: Phosphorylase b kinase regulatory subunit beta (1093 aa).

A2 is modified (N-acetylalanine). A4 is subject to Phosphoserine. The segment at 7–29 is calmodulin-binding; the sequence is LTAEVSWKVLERRARTKRSGSVY. Phosphoserine; by autocatalysis is present on S12. 2 positions are modified to phosphoserine: S27 and S701. The disordered stretch occupies residues 689-716; sequence EPPKHSKVKRQSSTPSAPELGQQPDVNI. Calmodulin-binding stretches follow at residues 768–795 and 920–951; these read RVYRRAGSQKLWLAVRYGAAFTQKFSSS and NGRCWLNRRQIDGSLNRTPTGFYDRVWQILER. The S-farnesyl cysteine moiety is linked to residue C1090.

Belongs to the phosphorylase b kinase regulatory chain family. In terms of assembly, hexadecamer of 4 heterotetramers, each composed of alpha, beta, gamma, and delta subunits. Alpha (PHKA1 or PHKA2) and beta (PHKB) are regulatory subunits, gamma (PHKG1 or PHKG2) is the catalytic subunit, and delta is calmodulin. Post-translationally, ser-701 is probably phosphorylated by PKA. In terms of processing, although the final Cys may be farnesylated, the terminal tripeptide is probably not removed, and the C-terminus is not methylated.

It is found in the cell membrane. It participates in glycan biosynthesis; glycogen metabolism. Its activity is regulated as follows. By phosphorylation of various serine residues. Phosphorylase b kinase catalyzes the phosphorylation of serine in certain substrates, including troponin I. The beta chain acts as a regulatory unit and modulates the activity of the holoenzyme in response to phosphorylation. The polypeptide is Phosphorylase b kinase regulatory subunit beta (PHKB) (Homo sapiens (Human)).